Here is a 1574-residue protein sequence, read N- to C-terminus: Centrosomal protein of 170 kDa protein B (1574 aa).

Residues 23 to 73 enclose the FHA domain; the sequence is IFVGRDECELMLQSRSVDKQHAVINYDQDRDEHWVKDLGSLNGTFVNDVRI. 3 disordered regions span residues 121 to 258, 316 to 395, and 409 to 578; these read VSVK…GVGG, DWLV…RDPQ, and FDGD…QDQE. 3 stretches are compositionally biased toward basic and acidic residues: residues 147 to 157, 182 to 197, and 325 to 344; these read RPEKGDRRHGA, SEDRHQEEPYSERPKD, and LLRRDGPGDDRHSTKSDLPV. The residue at position 360 (serine 360) is a Phosphoserine. The segment covering 370-382 has biased composition (low complexity); sequence ASVSGASAEASGE. Serine 421 is subject to Phosphoserine. Residues 430-446 are compositionally biased toward basic and acidic residues; that stretch reads PKADKRRGPGTSDRDRP. Polar residues predominate over residues 452–463; the sequence is ATGSSSGPQRAS. Basic and acidic residues predominate over residues 465-474; sequence LKREKTEERL. Over residues 475–488 the composition is skewed to polar residues; that stretch reads GNTSPVPRASTRSF. Phosphoserine occurs at positions 478 and 490. Residues 518–528 are compositionally biased toward pro residues; sequence EKTPPVLPAPL. Serine 534 is modified (phosphoserine). Phosphothreonine is present on residues threonine 540 and threonine 541. Serine 595, serine 617, serine 653, serine 709, serine 744, serine 746, serine 749, serine 751, serine 819, and serine 843 each carry phosphoserine. Disordered regions lie at residues 637 to 826, 839 to 882, 924 to 1300, 1333 to 1358, 1377 to 1407, and 1510 to 1535; these read PGMA…RDGL, RSGR…HISS, SKSA…DPYG, AGDGDSLGSPGPTRSPSLGNVPNTPA, NFQKVPPGSMNSHNLDQNMNDSRDDALTNKT, and NRAPSGSGQPGLGKARPAAQSSTSPA. The segment covering 857–867 has biased composition (polar residues); the sequence is FARQESFTKEP. At serine 947 the chain carries Phosphoserine. Over residues 950–959 the composition is skewed to polar residues; that stretch reads DTASTISLLS. Phosphoserine occurs at positions 965 and 981. Residues 996-1005 show a composition bias toward basic and acidic residues; that stretch reads ARERMSERQH. Residues 1084–1102 show a composition bias toward polar residues; it reads RSSATAQKVQQALTRSNSL. Serine 1122 is subject to Phosphoserine. Low complexity predominate over residues 1134 to 1146; the sequence is AANPEPANRAAPE. A phosphoserine mark is found at serine 1166 and serine 1186. Residues 1199 to 1213 are compositionally biased toward low complexity; it reads AEARAAAKKAAATAA. The span at 1265–1282 shows a compositional bias: polar residues; it reads HASTATQTPRGSSSTRAR. Threonine 1289 carries the post-translational modification Phosphothreonine. Serine 1341 is modified (phosphoserine). 2 stretches are compositionally biased toward polar residues: residues 1344-1358 and 1385-1396; these read PTRSPSLGNVPNTPA and SMNSHNLDQNMN. Residue threonine 1345 is modified to Phosphothreonine. Serine 1347 is subject to Phosphoserine. A phosphoserine mark is found at serine 1530 and serine 1533.

The protein belongs to the CEP170 family.

It is found in the cytoplasm. Its subcellular location is the cytoskeleton. Functionally, plays a role in microtubule organization. The protein is Centrosomal protein of 170 kDa protein B (Cep170b) of Mus musculus (Mouse).